Here is a 229-residue protein sequence, read N- to C-terminus: Potassium/proton antiporter CemA (229 aa).

3 consecutive transmembrane segments (helical) span residues 7–27 (LTPF…SLSF), 106–126 (LILH…YSIL), and 193–213 (LVST…FLFL).

This sequence belongs to the CemA family.

The protein resides in the plastid. Its subcellular location is the chloroplast inner membrane. It carries out the reaction K(+)(in) + H(+)(out) = K(+)(out) + H(+)(in). Contributes to K(+)/H(+) antiport activity by supporting proton efflux to control proton extrusion and homeostasis in chloroplasts in a light-dependent manner to modulate photosynthesis. Prevents excessive induction of non-photochemical quenching (NPQ) under continuous-light conditions. Indirectly promotes efficient inorganic carbon uptake into chloroplasts. The chain is Potassium/proton antiporter CemA from Illicium oligandrum (Star anise).